The primary structure comprises 161 residues: Phosphopantetheine adenylyltransferase (161 aa).

Residue Ser9 coordinates substrate. ATP contacts are provided by residues 9–10 (SF) and His17. Substrate is bound by residues Lys41, Thr73, and Arg87. Residues 88–90 (GLR), Glu98, and 123–129 (YSFISST) contribute to the ATP site.

It belongs to the bacterial CoaD family. In terms of assembly, homohexamer. Mg(2+) is required as a cofactor.

The protein resides in the cytoplasm. The enzyme catalyses (R)-4'-phosphopantetheine + ATP + H(+) = 3'-dephospho-CoA + diphosphate. It functions in the pathway cofactor biosynthesis; coenzyme A biosynthesis; CoA from (R)-pantothenate: step 4/5. Reversibly transfers an adenylyl group from ATP to 4'-phosphopantetheine, yielding dephospho-CoA (dPCoA) and pyrophosphate. The protein is Phosphopantetheine adenylyltransferase of Desulforamulus reducens (strain ATCC BAA-1160 / DSM 100696 / MI-1) (Desulfotomaculum reducens).